Reading from the N-terminus, the 320-residue chain is Glycerol-3-phosphate dehydrogenase [NAD(P)+] (320 aa).

NADPH-binding residues include Phe11, Arg30, and Lys102. Residues Lys102, Gly130, and Ser132 each coordinate sn-glycerol 3-phosphate. Ala134 provides a ligand contact to NADPH. Sn-glycerol 3-phosphate is bound by residues Lys185, Asp238, Ser248, Arg249, and Asn250. The Proton acceptor role is filled by Lys185. NADPH is bound at residue Arg249. Position 270 (Glu270) interacts with NADPH.

This sequence belongs to the NAD-dependent glycerol-3-phosphate dehydrogenase family.

The protein localises to the cytoplasm. The catalysed reaction is sn-glycerol 3-phosphate + NAD(+) = dihydroxyacetone phosphate + NADH + H(+). It catalyses the reaction sn-glycerol 3-phosphate + NADP(+) = dihydroxyacetone phosphate + NADPH + H(+). It participates in membrane lipid metabolism; glycerophospholipid metabolism. In terms of biological role, catalyzes the reduction of the glycolytic intermediate dihydroxyacetone phosphate (DHAP) to sn-glycerol 3-phosphate (G3P), the key precursor for phospholipid synthesis. This Roseobacter denitrificans (strain ATCC 33942 / OCh 114) (Erythrobacter sp. (strain OCh 114)) protein is Glycerol-3-phosphate dehydrogenase [NAD(P)+].